The following is a 315-amino-acid chain: Glutamyl-Q tRNA(Asp) synthetase (315 aa).

Residues 23 to 27 (RFAPS) and E59 contribute to the L-glutamate site. The 'HIGH' region motif lies at 26–36 (PSPTGPLHIGS). Zn(2+) contacts are provided by C115, C117, Y142, and C146. L-glutamate is bound by residues Y202 and R220. The short motif at 258 to 262 (KLSKQ) is the 'KMSKS' region element. K261 contributes to the ATP binding site.

Belongs to the class-I aminoacyl-tRNA synthetase family. GluQ subfamily. Requires Zn(2+) as cofactor.

Functionally, catalyzes the tRNA-independent activation of glutamate in presence of ATP and the subsequent transfer of glutamate onto a tRNA(Asp). Glutamate is transferred on the 2-amino-5-(4,5-dihydroxy-2-cyclopenten-1-yl) moiety of the queuosine in the wobble position of the QUC anticodon. In Ralstonia nicotianae (strain ATCC BAA-1114 / GMI1000) (Ralstonia solanacearum), this protein is Glutamyl-Q tRNA(Asp) synthetase.